The following is a 547-amino-acid chain: Dihydroxy-acid dehydratase (547 aa).

Asp-78 is a binding site for Mg(2+). Residue Cys-119 participates in [2Fe-2S] cluster binding. Residues Asp-120 and Lys-121 each contribute to the Mg(2+) site. Lys-121 carries the post-translational modification N6-carboxylysine. Residue Cys-191 coordinates [2Fe-2S] cluster. Residue Glu-439 participates in Mg(2+) binding. Ser-464 (proton acceptor) is an active-site residue.

The protein belongs to the IlvD/Edd family. Homodimer. It depends on [2Fe-2S] cluster as a cofactor. Mg(2+) is required as a cofactor.

The catalysed reaction is (2R)-2,3-dihydroxy-3-methylbutanoate = 3-methyl-2-oxobutanoate + H2O. The enzyme catalyses (2R,3R)-2,3-dihydroxy-3-methylpentanoate = (S)-3-methyl-2-oxopentanoate + H2O. It participates in amino-acid biosynthesis; L-isoleucine biosynthesis; L-isoleucine from 2-oxobutanoate: step 3/4. It functions in the pathway amino-acid biosynthesis; L-valine biosynthesis; L-valine from pyruvate: step 3/4. Functions in the biosynthesis of branched-chain amino acids. Catalyzes the dehydration of (2R,3R)-2,3-dihydroxy-3-methylpentanoate (2,3-dihydroxy-3-methylvalerate) into 2-oxo-3-methylpentanoate (2-oxo-3-methylvalerate) and of (2R)-2,3-dihydroxy-3-methylbutanoate (2,3-dihydroxyisovalerate) into 2-oxo-3-methylbutanoate (2-oxoisovalerate), the penultimate precursor to L-isoleucine and L-valine, respectively. The chain is Dihydroxy-acid dehydratase from Archaeoglobus fulgidus (strain ATCC 49558 / DSM 4304 / JCM 9628 / NBRC 100126 / VC-16).